The following is a 268-amino-acid chain: Glutamate 5-kinase (268 aa).

Residue K15 participates in ATP binding. Residues S55, D142, and N158 each contribute to the substrate site. 178-179 is a binding site for ATP; it reads SD.

This sequence belongs to the glutamate 5-kinase family.

It is found in the cytoplasm. The enzyme catalyses L-glutamate + ATP = L-glutamyl 5-phosphate + ADP. The protein operates within amino-acid biosynthesis; L-proline biosynthesis; L-glutamate 5-semialdehyde from L-glutamate: step 1/2. Functionally, catalyzes the transfer of a phosphate group to glutamate to form L-glutamate 5-phosphate. This Oenococcus oeni (strain ATCC BAA-331 / PSU-1) protein is Glutamate 5-kinase.